We begin with the raw amino-acid sequence, 398 residues long: Nuclear egress protein 2 (398 aa).

Residues Met-1 to Trp-359 are Perinuclear space-facing. Disordered stretches follow at residues Ala-202–Pro-246 and Leu-306–Arg-334. The span at Ala-215–His-224 shows a compositional bias: pro residues. Position 216 is a phosphoserine (Ser-216). The segment covering Pro-225–Gly-240 has biased composition (low complexity). Residues Ser-311 to Pro-323 are compositionally biased toward basic residues. Residues Leu-360 to Trp-382 traverse the membrane as a helical segment. At Arg-383–Asp-398 the chain is on the nuclear side.

Belongs to the herpesviridae NEC2 protein family. In terms of assembly, forms a heterohexameric complex with NEC1. Interacts with host UBA7 and RNF170; this interaction promotes UBA7 proteasomal degradation. In terms of processing, phosphorylated. Phosphorylation by viral kinase UL97 at Ser-216 plays an important role for correct viral nuclear egress complex (NEC) localization.

Its subcellular location is the host nucleus inner membrane. In terms of biological role, plays an essential role in virion nuclear egress, the first step of virion release from infected cell. Within the host nucleus, NEC1 interacts with the newly formed capsid through the vertexes and directs it to the inner nuclear membrane by associating with NEC2. Induces the budding of the capsid at the inner nuclear membrane as well as its envelopment into the perinuclear space. There, the NEC1/NEC2 complex promotes the fusion of the enveloped capsid with the outer nuclear membrane and the subsequent release of the viral capsid into the cytoplasm where it will reach the secondary budding sites in the host Golgi or trans-Golgi network. Inhibits host ISGylation and subsequent innate antiviral response by targeting host UBA7 for proteasomal degradation. This Homo sapiens (Human) protein is Nuclear egress protein 2.